We begin with the raw amino-acid sequence, 397 residues long: S-adenosylmethionine synthase (397 aa).

H17 is an ATP binding site. A Mg(2+)-binding site is contributed by D19. E45 provides a ligand contact to K(+). L-methionine-binding residues include E58 and Q101. The interval 101-111 is flexible loop; that stretch reads QSPDIAQGVDK. Residues 176-178, 243-244, D252, 258-259, and K279 each bind ATP; these read DGK, RF, and RK. D252 is a binding site for L-methionine. K283 serves as a coordination point for L-methionine.

It belongs to the AdoMet synthase family. As to quaternary structure, homotetramer; dimer of dimers. Mg(2+) serves as cofactor. The cofactor is K(+).

The protein resides in the cytoplasm. The enzyme catalyses L-methionine + ATP + H2O = S-adenosyl-L-methionine + phosphate + diphosphate. It participates in amino-acid biosynthesis; S-adenosyl-L-methionine biosynthesis; S-adenosyl-L-methionine from L-methionine: step 1/1. In terms of biological role, catalyzes the formation of S-adenosylmethionine (AdoMet) from methionine and ATP. The overall synthetic reaction is composed of two sequential steps, AdoMet formation and the subsequent tripolyphosphate hydrolysis which occurs prior to release of AdoMet from the enzyme. This chain is S-adenosylmethionine synthase, found in Staphylococcus aureus (strain USA300).